Here is a 199-residue protein sequence, read N- to C-terminus: MFKNTFQSGFLSILYSIGSKPLQLWDKKVRNGHIKRITDNDIQSLVLEIVGTNVSTTFITCPADPKKTLGIKLPFLVMIIKNMKKYFTFEVQVLDDKNVRRRFRASNYQSTTRVKPFICTMPMRLDEGWNQIQFNLSDFTRRAYGTNYVETLRVQIHANCRIRRVYFSDRLYSEDELPPEFKLFLPIQKPVQKSNAICS.

Belongs to the CFAP20 family. Expressed in spermatocytes and chordotonal organs in sensory neurons of the antenna.

Its subcellular location is the nucleus. The protein resides in the nucleolus. The protein localises to the cell projection. It is found in the cilium. It localises to the cytoplasm. Its subcellular location is the cytoskeleton. The protein resides in the microtubule organizing center. The protein localises to the centrosome. It is found in the centriole. It localises to the flagellum. Its subcellular location is the cilium axoneme. Functionally, cilium- and flagellum-specific protein that plays a role in axonemal structure organization and motility. Microtubule inner protein (MIP) part of the dynein-decorated doublet microtubules (DMTs) in cilia axoneme, which is required for motile cilia beating. Involved in the regulation of the size and morphology of cilia. Required for sperm individualization, differentiation of the sperm flagellum and tubulin polyglycylation of axonemal microtubules. In Drosophila melanogaster (Fruit fly), this protein is Cilia- and flagella-associated protein 20.